The chain runs to 695 residues: MNLEKVRNIGISAHIDSGKTTLSERILFYSGRIHKIEDVRGGGDGATMDHMELEKERGITITSAATSVTHNGYHINLIDTPGHVDFTVEVERSLRVLDGAVLVLCSVGGVQSQSITVDRQMKRYQIPRLAFINKMDRTGANPRRVVEQLREKLGADAFLAQIPIGAEENFRGVVDLIEMVAYTFEGDQGEKVVTGEIPADLKDEAEEARVAMLDSLSNYSDEVMELLLSEEEVSKDMIYRVMREAVLNGATPVYMGSAYKNKGVQPLLNAVTQYLPSPLDREIYGRDPSDEEKKIELSPDPDKPFVGMAFKIVEDPFGQLTFMRIYQGTIKKGEAYTNQRSQKKERFSRIVRMHSEKRDEIDEAGPGDIIAVMGIDCASGDTYCSERDYATLESMYVPEPVIKIAVNPLNRGDGDKMSKALQRFRKEDPTFSVYTDEETNEILISGMGELHLEIYIERIRREYGVEIEVGAPKVSYRESPTREVEFNYKHKKQTGGSGQYAHIVGKLIPIESESEDSFEFEEKVVGGRIPKQYIPAVEKGFRDILGKGPIADYPVVGTRIELLDGSYHDVDSSEKAFYTAAQGCFREYFKQAAPKLLEPIMSVEIEVPEEFQGTVTGDVIRRRGLMTSNDTNEGMTVILAEVPLAETFGYATDLRSMTQGQGTFTMELAAYRQTPSNIQEEIIAERKKDELAGAR.

The 276-residue stretch at 4-279 (EKVRNIGISA…AVTQYLPSPL (276 aa)) folds into the tr-type G domain. GTP is bound by residues 13–20 (AHIDSGKT), 79–83 (DTPGH), and 133–136 (NKMD).

It belongs to the TRAFAC class translation factor GTPase superfamily. Classic translation factor GTPase family. EF-G/EF-2 subfamily.

Its subcellular location is the cytoplasm. In terms of biological role, catalyzes the GTP-dependent ribosomal translocation step during translation elongation. During this step, the ribosome changes from the pre-translocational (PRE) to the post-translocational (POST) state as the newly formed A-site-bound peptidyl-tRNA and P-site-bound deacylated tRNA move to the P and E sites, respectively. Catalyzes the coordinated movement of the two tRNA molecules, the mRNA and conformational changes in the ribosome. The protein is Elongation factor G of Rhodopirellula baltica (strain DSM 10527 / NCIMB 13988 / SH1).